Consider the following 451-residue polypeptide: UPF0210 protein CLL_A1718 (451 aa).

Belongs to the UPF0210 family. Homodimer.

This is UPF0210 protein CLL_A1718 from Clostridium botulinum (strain Eklund 17B / Type B).